Here is a 311-residue protein sequence, read N- to C-terminus: Thioredoxin reductase (311 aa).

FAD is bound at residue 33–43 (EGFFSGISGGQ). Cys138 and Cys141 are oxidised to a cystine. FAD is bound at residue 283-292 (DVQDKYYRQA).

The protein belongs to the class-II pyridine nucleotide-disulfide oxidoreductase family. Homodimer. It depends on FAD as a cofactor.

It localises to the cytoplasm. The catalysed reaction is [thioredoxin]-dithiol + NADP(+) = [thioredoxin]-disulfide + NADPH + H(+). The sequence is that of Thioredoxin reductase (trxB) from Chlamydia pneumoniae (Chlamydophila pneumoniae).